Reading from the N-terminus, the 848-residue chain is Trimethylamine-N-oxide reductase 1 (848 aa).

The segment at residues Met1–Ala39 is a signal peptide (tat-type signal). Ser191 is a Mo-bis(molybdopterin guanine dinucleotide) binding site.

This sequence belongs to the prokaryotic molybdopterin-containing oxidoreductase family. As to quaternary structure, interacts with the N-terminal domain of TorC. It depends on Mo-bis(molybdopterin guanine dinucleotide) as a cofactor. Predicted to be exported by the Tat system. The position of the signal peptide cleavage has not been experimentally proven.

The protein resides in the periplasm. It carries out the reaction trimethylamine + 2 Fe(III)-[cytochrome c] + H2O = trimethylamine N-oxide + 2 Fe(II)-[cytochrome c] + 3 H(+). Functionally, reduces trimethylamine-N-oxide (TMAO) into trimethylamine; an anaerobic reaction coupled to energy-yielding reactions. This chain is Trimethylamine-N-oxide reductase 1 (torA), found in Escherichia coli O157:H7.